Consider the following 745-residue polypeptide: Junction plakoglobin (745 aa).

M1 bears the N-acetylmethionine mark. A glycan (O-linked (GlcNAc) threonine) is linked at T14. Residues S99 and S125 each carry the phosphoserine modification. 12 ARM repeats span residues 132–171 (NYQDDAELATRALPELTKLLNDEDPVVVTKAAMIVNQLSK), 172–215 (KEAS…LSHH), 216–255 (REGLLAIFKSGGIPALVRMLSSPVESVLFYAITTLHNLLL), 258–297 (EGAKMAVRLADGLQKMVPLLNKNNPKFLAITTDCLQLLAY), 298–341 (GNQE…LSVC), 342–381 (PSNKPAIVEAGGMQALGKHLTSNSPRLVQNCLWTLRNLSD), 383–420 (ATKQEGLESVLKILVNQLSVDDVNVLTCATGTLSNLTC), 423–464 (SKNK…HLTS), 470–510 (EMAQ…NLAL), 512–551 (PANHAPLQEASVIPRLVQLLVKAHQDAQRHVAAGTQQPYT), 574–613 (PMNRMEIFRLNTIPLFVQLLYSSVENIQRVAAGVLCELAQ), and 615–661 (KEAA…PDYR). Positions 132 to 297 (NYQDDAELAT…TTDCLQLLAY (166 aa)) are interaction with DSC1 and DSG1. At S182 the chain carries Phosphoserine. The interval 574–661 (PMNRMEIFRL…ISEDKNPDYR (88 aa)) is interaction with DSC1. Residues S665 and S730 each carry the phosphoserine modification.

This sequence belongs to the beta-catenin family. In terms of assembly, homodimer. Component of an E-cadherin/catenin adhesion complex composed of at least E-cadherin/CDH1 and gamma-catenin/JUP, and possibly alpha-catenin/CTNNA1; the complex is located to adherens junctions. The stable association of CTNNA1 is controversial as CTNNA1 was shown not to bind to F-actin when assembled in the complex. Interacts with MUC1. Interacts with CAV1. Interacts with PTPRJ. Interacts with DSG1. Interacts with DSC1 and DSC2. Interacts with PKP2. Interacts with PKP3 (via N-terminus); the interaction is required for PKP3 localization to desmosome cell-cell junctions. Interacts with DSG4. In terms of processing, may be phosphorylated by FER.

It is found in the cell junction. The protein localises to the adherens junction. It localises to the desmosome. The protein resides in the cytoplasm. Its subcellular location is the cytoskeleton. It is found in the cell membrane. The protein localises to the nucleus. Functionally, common junctional plaque protein. The membrane-associated plaques are architectural elements in an important strategic position to influence the arrangement and function of both the cytoskeleton and the cells within the tissue. The presence of plakoglobin in both the desmosomes and in the intermediate junctions suggests that it plays a central role in the structure and function of submembranous plaques. Acts as a substrate for VE-PTP and is required by it to stimulate VE-cadherin function in endothelial cells. Can replace beta-catenin in E-cadherin/catenin adhesion complexes which are proposed to couple cadherins to the actin cytoskeleton. This chain is Junction plakoglobin, found in Sus scrofa (Pig).